The following is a 406-amino-acid chain: Probable endo-xylogalacturonan hydrolase A (406 aa).

The N-terminal stretch at 1-18 is a signal peptide; that stretch reads MISLNSIFLLSLVGLSRA. The tract at residues 20–49 is disordered; sequence PSRSETSPDRTIKPRAACTPTAGGSSSTDD. 6 PbH1 repeats span residues 183-213, 214-235, 237-257, 266-289, 299-320, and 368-390; these read TSNAQFTSLTMDATSNSDNLPKNTDAFDIGA, STYVTISSVAITNDDDCVAFKP, ANYVTVENVSCTGSHGISVGS, VQNVYARNITMINSSKAAGIKTYP, VKNATFEDFIVDGCDYAFQIQS, and TCDVTISGFEVKAPSGDAKILCG. The Proton donor role is filled by Asp-228. An N-linked (GlcNAc...) asparagine glycan is attached at Asn-244. His-251 is an active-site residue. Asn-273, Asn-278, and Asn-301 each carry an N-linked (GlcNAc...) asparagine glycan.

The protein belongs to the glycosyl hydrolase 28 family.

Its subcellular location is the secreted. Pectinolytic enzyme involved in the degradation of xylogalacturonan (xga), a galacturonan backbone heavily substituted with xylose, and which is one important component of the hairy regions of pectin. Activity requires a galacturonic acid backbone substituted with xylose. This is Probable endo-xylogalacturonan hydrolase A (xghA) from Aspergillus oryzae (strain ATCC 42149 / RIB 40) (Yellow koji mold).